The following is a 188-amino-acid chain: Adenine phosphoribosyltransferase (188 aa).

Belongs to the purine/pyrimidine phosphoribosyltransferase family. As to quaternary structure, homodimer.

Its subcellular location is the cytoplasm. The enzyme catalyses AMP + diphosphate = 5-phospho-alpha-D-ribose 1-diphosphate + adenine. The protein operates within purine metabolism; AMP biosynthesis via salvage pathway; AMP from adenine: step 1/1. Its function is as follows. Catalyzes a salvage reaction resulting in the formation of AMP, that is energically less costly than de novo synthesis. This is Adenine phosphoribosyltransferase from Paraburkholderia phymatum (strain DSM 17167 / CIP 108236 / LMG 21445 / STM815) (Burkholderia phymatum).